Here is a 371-residue protein sequence, read N- to C-terminus: N-acetyldiaminopimelate deacetylase (371 aa).

The active site involves Asp68. Glu127 functions as the Proton acceptor in the catalytic mechanism.

The protein belongs to the peptidase M20A family. N-acetyldiaminopimelate deacetylase subfamily.

It carries out the reaction N-acetyl-(2S,6S)-2,6-diaminopimelate + H2O = (2S,6S)-2,6-diaminopimelate + acetate. The protein operates within amino-acid biosynthesis; L-lysine biosynthesis via DAP pathway; LL-2,6-diaminopimelate from (S)-tetrahydrodipicolinate (acetylase route): step 3/3. Catalyzes the conversion of N-acetyl-diaminopimelate to diaminopimelate and acetate. This is N-acetyldiaminopimelate deacetylase from Listeria monocytogenes serotype 4b (strain CLIP80459).